The chain runs to 654 residues: Pyoverdine export ATP-binding/permease protein PvdT (654 aa).

The ABC transporter domain occupies 6–245; the sequence is IELCDIRKAY…AHKGIQAEEL (240 aa). 43–50 is an ATP binding site; sequence GASGSGKS. A run of 4 helical transmembrane segments spans residues 282–302, 529–549, 584–604, and 614–634; these read ALTL…LAVG, LSLM…IGVM, AIML…VVGA, and AFAL…GVVF.

The protein belongs to the ABC transporter superfamily. Macrolide exporter (TC 3.A.1.122) family. As to quaternary structure, part of the tripartite efflux system PvdRT-OpmQ, which is composed of an inner membrane component with both ATPase and permease domains, PvdT, a periplasmic membrane fusion protein, PvdR, and an outer membrane component, OpmQ.

It localises to the cell inner membrane. With respect to regulation, has a basal ATPase activity that is stimulated by PvdR. In vitro, interaction with PVD influences the affinity of PvdT to PvdR. Part of the tripartite efflux system PvdRT-OpmQ required for the secretion into the extracellular milieu of the siderophore pyoverdine (PVD), which is involved in iron acquisition. This subunit binds PVD and drives its secretion by hydrolyzing ATP. The system is responsible for export of newly synthesized PVD after the final steps of biosynthesis have taken place in the periplasm. It is also responsible for recycling of PVD after internalization of ferri-PVD into the periplasm by the outer-membrane receptor FpvA and release of iron from PVD, thus making PVD available for new cycles of iron uptake. Contributes to resistance against ampicillin. The sequence is that of Pyoverdine export ATP-binding/permease protein PvdT from Pseudomonas putida (strain ATCC 47054 / DSM 6125 / CFBP 8728 / NCIMB 11950 / KT2440).